The primary structure comprises 84 residues: Small ribosomal subunit protein bS16 (84 aa).

This sequence belongs to the bacterial ribosomal protein bS16 family.

The sequence is that of Small ribosomal subunit protein bS16 from Desulforapulum autotrophicum (strain ATCC 43914 / DSM 3382 / VKM B-1955 / HRM2) (Desulfobacterium autotrophicum).